The sequence spans 299 residues: Ribosomal protein L11 methyltransferase (299 aa).

Residues T152, G172, D194, and N234 each contribute to the S-adenosyl-L-methionine site.

It belongs to the methyltransferase superfamily. PrmA family.

It localises to the cytoplasm. The catalysed reaction is L-lysyl-[protein] + 3 S-adenosyl-L-methionine = N(6),N(6),N(6)-trimethyl-L-lysyl-[protein] + 3 S-adenosyl-L-homocysteine + 3 H(+). In terms of biological role, methylates ribosomal protein L11. This Geobacter sulfurreducens (strain ATCC 51573 / DSM 12127 / PCA) protein is Ribosomal protein L11 methyltransferase.